Here is an 88-residue protein sequence, read N- to C-terminus: Augerpeptide Hhe9a (88 aa).

The N-terminal stretch at 1 to 21 (MMTKTGLVLLFAFLLVFPVSS) is a signal peptide. A propeptide spanning residues 22 to 49 (LPMDAEAGHARLEMDKRDAGNEAWTRLL) is cleaved from the precursor. 3 cysteine pairs are disulfide-bonded: cysteine 56–cysteine 71, cysteine 61–cysteine 73, and cysteine 67–cysteine 86.

Expressed by the venom duct.

It is found in the secreted. The sequence is that of Augerpeptide Hhe9a from Hastula hectica (Sea snail).